The sequence spans 378 residues: UPF0754 membrane protein BCE_0952 (378 aa).

A run of 2 helical transmembrane segments spans residues 1–21 (MNIW…GGFT) and 357–377 (YLGA…LLFL).

It belongs to the UPF0754 family.

Its subcellular location is the cell membrane. This chain is UPF0754 membrane protein BCE_0952, found in Bacillus cereus (strain ATCC 10987 / NRS 248).